The following is a 260-amino-acid chain: Imidazole glycerol phosphate synthase subunit HisF (260 aa).

Catalysis depends on residues D11 and D130.

This sequence belongs to the HisA/HisF family. As to quaternary structure, heterodimer of HisH and HisF.

The protein localises to the cytoplasm. The catalysed reaction is 5-[(5-phospho-1-deoxy-D-ribulos-1-ylimino)methylamino]-1-(5-phospho-beta-D-ribosyl)imidazole-4-carboxamide + L-glutamine = D-erythro-1-(imidazol-4-yl)glycerol 3-phosphate + 5-amino-1-(5-phospho-beta-D-ribosyl)imidazole-4-carboxamide + L-glutamate + H(+). It functions in the pathway amino-acid biosynthesis; L-histidine biosynthesis; L-histidine from 5-phospho-alpha-D-ribose 1-diphosphate: step 5/9. Its function is as follows. IGPS catalyzes the conversion of PRFAR and glutamine to IGP, AICAR and glutamate. The HisF subunit catalyzes the cyclization activity that produces IGP and AICAR from PRFAR using the ammonia provided by the HisH subunit. The protein is Imidazole glycerol phosphate synthase subunit HisF of Desulfatibacillum aliphaticivorans.